The primary structure comprises 20 residues: Phylloseptin-O1 (20 aa).

Residue Gly20 is modified to Glycine amide.

As to expression, expressed by the skin glands.

Its subcellular location is the secreted. In terms of biological role, has antiprotozoal activity against T.cruzi. In Pithecopus oreades (Orange-legged leaf frog), this protein is Phylloseptin-O1 (psn4).